Consider the following 601-residue polypeptide: MIVPDLVADAMTAGPPAAKSGDGATMFGQVSDLGPGTVLAVETARDGVPTAWIAPTSLRAVVGMLREPAAALRMLFDLTAIDERQRAHRVGQPDCAFTLVCHFMALGGAGDALRLKVPLPAEAPRVPSIADFWPNANWYEREVWDLFGITFEGHPFLRRILTPPTWTGHPLRKDHYARATEMPPYSLTEDQEMAEQQALRFDPGAWGMARHSAHSDFMFLNLGPNHPSVHGVFRIVLQLEGERIVDAVPDIGFHHRGAEKMGERQSWHSFIPYTDRVDYLGGVMNNFPYVMAVEKLAGITVPPRAQMIRVMLAELFRVASHLVFYGTMTQDVGQLSPVFYMFSDRERVFEIIEAICGFRMHPAWFRIGGVAMDLPRGWDGLIRDFLDYLPPRLDEYEKMVMRNPIFRARTIGVGAYDVSEAIAWGVTGPGLRACGLEWDLRRKVPYSGYDQLEFDIPTAQNGDCYDRVRVHIAEIRQSLRIIRQCLDGMPAGAIKAEHRLTTPPPRARTMHDIETLIHHFLSVSWGPVIPPGEAHACVEATKGLNSYHLISDGGTMSYRTRIRTPSFPHLQMIPLISRGGMIADLIAIIGSIDFVMADVDR.

Residues 1–192 (MIVPDLVADA…PPYSLTEDQE (192 aa)) form an NADH dehydrogenase I subunit C region. Residues 216–601 (DFMFLNLGPN…IDFVMADVDR (386 aa)) form an NADH dehydrogenase I subunit D region.

It in the N-terminal section; belongs to the complex I 30 kDa subunit family. The protein in the C-terminal section; belongs to the complex I 49 kDa subunit family. In terms of assembly, NDH-1 is composed of 13 different subunits. Subunits NuoB, CD, E, F, and G constitute the peripheral sector of the complex.

It localises to the cell inner membrane. The enzyme catalyses a quinone + NADH + 5 H(+)(in) = a quinol + NAD(+) + 4 H(+)(out). Functionally, NDH-1 shuttles electrons from NADH, via FMN and iron-sulfur (Fe-S) centers, to quinones in the respiratory chain. The immediate electron acceptor for the enzyme in this species is believed to be ubiquinone. Couples the redox reaction to proton translocation (for every two electrons transferred, four hydrogen ions are translocated across the cytoplasmic membrane), and thus conserves the redox energy in a proton gradient. The chain is NADH-quinone oxidoreductase subunit C/D from Gluconacetobacter diazotrophicus (strain ATCC 49037 / DSM 5601 / CCUG 37298 / CIP 103539 / LMG 7603 / PAl5).